The following is a 490-amino-acid chain: Homoserine O-acetyltransferase (490 aa).

An AB hydrolase-1 domain is found at 48–354 (NVILVCHALT…NSEYGHDAFL (307 aa)). The active-site Nucleophile is Ser153. Residue Arg223 participates in substrate binding. Catalysis depends on residues Asp317 and His350. Asp351 lines the substrate pocket. 2 CBS domains span residues 377–434 (MSHT…ANSI) and 438–490 (MTKN…LYEK).

Belongs to the AB hydrolase superfamily. MetX family. Homodimer.

It localises to the cytoplasm. It catalyses the reaction L-homoserine + acetyl-CoA = O-acetyl-L-homoserine + CoA. The protein operates within amino-acid biosynthesis; L-methionine biosynthesis via de novo pathway; O-acetyl-L-homoserine from L-homoserine: step 1/1. Transfers an acetyl group from acetyl-CoA to L-homoserine, forming acetyl-L-homoserine. The polypeptide is Homoserine O-acetyltransferase (Methanosphaera stadtmanae (strain ATCC 43021 / DSM 3091 / JCM 11832 / MCB-3)).